The sequence spans 235 residues: Probable inactive serine protease 37 (235 aa).

The N-terminal stretch at 1–19 is a signal peptide; that stretch reads MKYVFYLGVLAGTFFFADS. Positions 20–233 constitute a Peptidase S1 domain; it reads SVQKEDPAPY…YVSWIENTAK (214 aa). Cystine bridges form between C40-C56, C131-C198, and C163-C177.

This sequence belongs to the peptidase S1 family. Testis-specific. Expressed in spermatids (at protein level).

It localises to the cytoplasmic vesicle. The protein localises to the secretory vesicle. It is found in the acrosome. The protein resides in the secreted. Plays a role in male fertility. May have a role in sperm migration or binding to zona-intact eggs. Involved in the activation of the proacrosin/acrosin system. The polypeptide is Probable inactive serine protease 37 (Homo sapiens (Human)).